Reading from the N-terminus, the 470-residue chain is Small ribosomal subunit protein bS1m (470 aa).

The disordered stretch occupies residues 436-470 (FKKIPMTAARLRGRYENSDSPSSPTMSGSSGYGLR). A compositionally biased stretch (low complexity) spans 453-464 (SDSPSSPTMSGS).

This sequence belongs to the bacterial ribosomal protein bS1 family. Component of the mitochondrial small ribosomal subunit (mt-SSU). Mature N.crassa 74S mitochondrial ribosomes consist of a small (37S) and a large (54S) subunit. The 37S small subunit contains a 16S ribosomal RNA (16S mt-rRNA) and 32 different proteins. The 54S large subunit contains a 23S rRNA (23S mt-rRNA) and 42 different proteins.

The protein localises to the mitochondrion. Functionally, component of the mitochondrial ribosome (mitoribosome), a dedicated translation machinery responsible for the synthesis of mitochondrial genome-encoded proteins, including at least some of the essential transmembrane subunits of the mitochondrial respiratory chain. The mitoribosomes are attached to the mitochondrial inner membrane and translation products are cotranslationally integrated into the membrane. The sequence is that of Small ribosomal subunit protein bS1m (mrp51) from Neurospora crassa (strain ATCC 24698 / 74-OR23-1A / CBS 708.71 / DSM 1257 / FGSC 987).